A 385-amino-acid chain; its full sequence is S-adenosylmethionine synthase (385 aa).

Histidine 15 serves as a coordination point for ATP. Aspartate 17 is a binding site for Mg(2+). Position 43 (glutamate 43) interacts with K(+). Positions 56 and 99 each coordinate L-methionine. Positions 99 to 109 (QSPDINQGVDR) are flexible loop. ATP is bound by residues 164–166 (DAK), 230–231 (RF), aspartate 239, 245–246 (RK), alanine 262, and lysine 266. Aspartate 239 is an L-methionine binding site. Position 270 (lysine 270) interacts with L-methionine.

The protein belongs to the AdoMet synthase family. In terms of assembly, homotetramer; dimer of dimers. It depends on Mg(2+) as a cofactor. The cofactor is K(+).

It is found in the cytoplasm. The catalysed reaction is L-methionine + ATP + H2O = S-adenosyl-L-methionine + phosphate + diphosphate. It functions in the pathway amino-acid biosynthesis; S-adenosyl-L-methionine biosynthesis; S-adenosyl-L-methionine from L-methionine: step 1/1. Functionally, catalyzes the formation of S-adenosylmethionine (AdoMet) from methionine and ATP. The overall synthetic reaction is composed of two sequential steps, AdoMet formation and the subsequent tripolyphosphate hydrolysis which occurs prior to release of AdoMet from the enzyme. The protein is S-adenosylmethionine synthase of Hamiltonella defensa subsp. Acyrthosiphon pisum (strain 5AT).